The primary structure comprises 357 residues: MTKENICIVFGGKSAEHDVSILTAQNVLNAIDKERYQVDIIYITNDGEWKKKDNITQEIKNTDELVINDVETGEISQLLSKGSLGKSYDAVFPLLHGPNGEDGTIQGLFEVLDIPYVGNGVLAASSSMDKLVMKQLFEHRGLPQLPYISFLRSEYEKYENNIIKLVNDKLTYPVFVKPANLGSSVGISKCNNEEELKSGITEAFQFDRKLVIEQGINAREIEVAVLGNDYPETTWPGEVVKDVAFYDYKSKYKDGKIRLDIPADLDQDVQMTLRNMALEAFKATDCSGLVRADFFVTDDNQIYINETNAMPGFTAYSMYPNLWKNMGLSYPDLIAKLIDLAKERYEDKKKNKYKIDY.

In terms of domain architecture, ATP-grasp spans 134-339; the sequence is KQLFEHRGLP…YPDLIAKLID (206 aa). 167–222 provides a ligand contact to ATP; that stretch reads NDKLTYPVFVKPANLGSSVGISKCNNEEELKSGITEAFQFDRKLVIEQGINAREIE. Mg(2+) is bound by residues aspartate 293, glutamate 306, and asparagine 308.

Belongs to the D-alanine--D-alanine ligase family. Mg(2+) serves as cofactor. Requires Mn(2+) as cofactor.

It is found in the cytoplasm. It carries out the reaction 2 D-alanine + ATP = D-alanyl-D-alanine + ADP + phosphate + H(+). Its pathway is cell wall biogenesis; peptidoglycan biosynthesis. Its function is as follows. Cell wall formation. The sequence is that of D-alanine--D-alanine ligase from Staphylococcus epidermidis (strain ATCC 12228 / FDA PCI 1200).